The chain runs to 1417 residues: DNA-directed RNA polymerase subunit beta' (1417 aa).

Positions 68, 70, 83, and 86 each coordinate Zn(2+). Mg(2+) is bound by residues aspartate 458, aspartate 460, and aspartate 462. Residues cysteine 811, cysteine 884, cysteine 891, and cysteine 894 each contribute to the Zn(2+) site.

This sequence belongs to the RNA polymerase beta' chain family. In terms of assembly, the RNAP catalytic core consists of 2 alpha, 1 beta, 1 beta' and 1 omega subunit. When a sigma factor is associated with the core the holoenzyme is formed, which can initiate transcription. Mg(2+) serves as cofactor. Zn(2+) is required as a cofactor.

It carries out the reaction RNA(n) + a ribonucleoside 5'-triphosphate = RNA(n+1) + diphosphate. In terms of biological role, DNA-dependent RNA polymerase catalyzes the transcription of DNA into RNA using the four ribonucleoside triphosphates as substrates. The protein is DNA-directed RNA polymerase subunit beta' of Francisella tularensis subsp. holarctica (strain OSU18).